A 330-amino-acid chain; its full sequence is Putative 4-hydroxythreonine-4-phosphate dehydrogenase (330 aa).

Residues His169, His213, and His263 each coordinate a divalent metal cation.

The protein belongs to the PdxA family. In terms of assembly, homodimer. It depends on Zn(2+) as a cofactor. The cofactor is Mg(2+). Requires Co(2+) as cofactor.

It localises to the cytoplasm. It catalyses the reaction 4-(phosphooxy)-L-threonine + NAD(+) = 3-amino-2-oxopropyl phosphate + CO2 + NADH. It functions in the pathway cofactor biosynthesis; pyridoxine 5'-phosphate biosynthesis; pyridoxine 5'-phosphate from D-erythrose 4-phosphate: step 4/5. Its function is as follows. Catalyzes the NAD(P)-dependent oxidation of 4-(phosphooxy)-L-threonine (HTP) into 2-amino-3-oxo-4-(phosphooxy)butyric acid which spontaneously decarboxylates to form 3-amino-2-oxopropyl phosphate (AHAP). This Novosphingobium aromaticivorans (Sphingomonas aromaticivorans) protein is Putative 4-hydroxythreonine-4-phosphate dehydrogenase.